The following is a 627-amino-acid chain: Protein zyg-11 homolog A (627 aa).

LRR repeat units lie at residues 123-146 (LPNL…LSCK), 203-227 (LPNL…SFLQ), and 409-432 (ITSI…LIMA).

The protein belongs to the zyg-11 family.

In terms of biological role, probably acts as a target recruitment subunit in an E3 ubiquitin ligase complex ZYGA-CUL2-elongin BC. The chain is Protein zyg-11 homolog A (Zyg11a) from Mus musculus (Mouse).